Reading from the N-terminus, the 367-residue chain is Damage-control phosphatase At2g17340 (367 aa).

N-acetylmethionine is present on Met-1. Residues Asp-220, Asn-221, and Asp-256 each coordinate Mn(2+). A Subfamily II EGMGR motif motif is present at residues 318–322 (EGMGR).

This sequence belongs to the damage-control phosphatase family. Phosphopantetheine phosphatase II subfamily. As to quaternary structure, multimer. Mn(2+) serves as cofactor. Ni(2+) is required as a cofactor.

Its activity is regulated as follows. Activity is strongly promoted by Co(2+), Ni(2+), Mg(2+), Cu(2+) and Mn(2+). Activity is inhibited by EDTA. Metal-dependent phosphatase with probable damage-control functions. Shows phosphatase activity against several substrates, including sugar phosphates and p-nitrophenyl phosphate(pNPP). Prefers sugar phosphate substrates, including the extremely potent glycating agents ribose-5-phosphate and erythrose-4-phosphate. This is Damage-control phosphatase At2g17340 from Arabidopsis thaliana (Mouse-ear cress).